Reading from the N-terminus, the 139-residue chain is Protein cornichon homolog 4 (139 aa).

Transmembrane regions (helical) follow at residues 5 to 25 (VFVF…YFII), 57 to 77 (LVTV…NLPV), and 118 to 138 (LGFH…ALIN).

This sequence belongs to the cornichon family. Interacts with Sec23/24 complex components SEC24B and SEC24D. Interacts with CCR5. Interacts with ADRB2 in the early secretory pathway.

Its subcellular location is the membrane. The protein localises to the endoplasmic reticulum. It localises to the endoplasmic reticulum-Golgi intermediate compartment. Functionally, involved in G protein-coupled receptors (GPCRs) trafficking from the endoplasmic reticulum to the cell surface; it promotes the exit of GPCRs from the early secretory pathway, likely through interaction with the COPII machinery. The chain is Protein cornichon homolog 4 (CNIH4) from Bos taurus (Bovine).